A 453-amino-acid chain; its full sequence is Protein IVY1 (453 aa).

Residues 1–16 (MPDNNTEQLQGSPSSD) are compositionally biased toward polar residues. The segment at 1–20 (MPDNNTEQLQGSPSSDQRLR) is disordered. Phosphoserine occurs at positions 59, 84, and 85. Coiled-coil stretches lie at residues 102–122 (KRDVKETQEALSTLLRNSNAY) and 230–257 (IRNLISYRESLSSLQARLDQLETLKHDF). 2 disordered regions span residues 316 to 340 (DGPYGTIGGDGETAGEAYNSDEETG) and 353 to 453 (TSQP…SSNI). S335 carries the phosphoserine modification. Low complexity predominate over residues 353–371 (TSQPSTSKTSLPKSKGSST). Composition is skewed to polar residues over residues 372–384 (VSTPNHSQSSSNK) and 404–429 (LMGTENSFSLPPTRNSAEETTQTFKQ). Residues 431-442 (SIKEDNDNHSSD) show a composition bias toward basic and acidic residues. Residues 443-453 (TDGMQDQSSNI) show a composition bias toward polar residues.

In terms of assembly, homomultimer. Interacts with YPT7 and VPS33.

It localises to the vacuole membrane. May be required for vacuolar fusion. Overexpression leads to fragmentation of vacuoles, missorting of the vacuolar enzyme carboxypeptidase Y (CPY) to the exterior of the cell and accumulation of multivesicular bodies inside the cell. In Saccharomyces cerevisiae (strain ATCC 204508 / S288c) (Baker's yeast), this protein is Protein IVY1 (IVY1).